A 71-amino-acid chain; its full sequence is Small ribosomal subunit protein bS21 (71 aa).

The span at 48 to 59 (KAAAAVKRHAKK) shows a compositional bias: basic residues. The interval 48 to 71 (KAAAAVKRHAKKVQRENRKFQRLY) is disordered. The span at 60–71 (VQRENRKFQRLY) shows a compositional bias: basic and acidic residues.

It belongs to the bacterial ribosomal protein bS21 family.

This chain is Small ribosomal subunit protein bS21, found in Saccharophagus degradans (strain 2-40 / ATCC 43961 / DSM 17024).